The sequence spans 568 residues: Potassium-transporting ATPase potassium-binding subunit (568 aa).

The next 11 membrane-spanning stretches (helical) occupy residues 6–26 (ILQILAFTAIIWALAKPIGGF), 64–84 (TGYAGSLLAFSLVSLLFTYLI), 135–155 (IALATHNFFSAAAGIAVAIAF), 179–199 (LYILLPMSLLAALFFCSQGVI), 254–274 (LANLAQMVLIFLIPAGLTYTF), 285–305 (WALLAAMTVLFLAGVCVVYPA), 382–402 (GLYGMLLFAILAVFIAGLMVG), 419–439 (MVMLSVLVLALCILGFSAAGI), 459–481 (VLYGYTSAAGNNGSAFAGLSANT), 488–508 (LGIAMLCGRFLMLIPLLAAAG), and 529–549 (LFVTLLVGVVVIVGALTFFPA).

This sequence belongs to the KdpA family. As to quaternary structure, the system is composed of three essential subunits: KdpA, KdpB and KdpC.

The protein resides in the cell inner membrane. Functionally, part of the high-affinity ATP-driven potassium transport (or Kdp) system, which catalyzes the hydrolysis of ATP coupled with the electrogenic transport of potassium into the cytoplasm. This subunit binds the periplasmic potassium ions and delivers the ions to the membrane domain of KdpB through an intramembrane tunnel. This Solibacter usitatus (strain Ellin6076) protein is Potassium-transporting ATPase potassium-binding subunit.